A 559-amino-acid chain; its full sequence is Urocanate hydratase (559 aa).

NAD(+) contacts are provided by residues 54-55 (GG), glutamine 132, 178-180 (GMG), glutamate 198, arginine 203, 244-245 (NA), 265-269 (QTSAH), 275-276 (YL), and tyrosine 324. Cysteine 412 is a catalytic residue. Residue glycine 494 coordinates NAD(+).

It belongs to the urocanase family. NAD(+) serves as cofactor.

It localises to the cytoplasm. The enzyme catalyses 4-imidazolone-5-propanoate = trans-urocanate + H2O. The protein operates within amino-acid degradation; L-histidine degradation into L-glutamate; N-formimidoyl-L-glutamate from L-histidine: step 2/3. Functionally, catalyzes the conversion of urocanate to 4-imidazolone-5-propionate. The chain is Urocanate hydratase from Photorhabdus laumondii subsp. laumondii (strain DSM 15139 / CIP 105565 / TT01) (Photorhabdus luminescens subsp. laumondii).